The sequence spans 1456 residues: Alpha-2-macroglobulin-like protein 1 (1456 aa).

The first 19 residues, 1-19, serve as a signal peptide directing secretion; the sequence is MVPTILLSALLLHFTDVVA. Asn48, Asn172, and Asn868 each carry an N-linked (GlcNAc...) asparagine glycan.

It belongs to the protease inhibitor I39 (alpha-2-macroglobulin) family. In terms of assembly, homotetramer; consists of two dimer pairs that are disulfide-linked. Part of a complex composed of complement component C3, CLCA1/CLCA3, A2ML1/OH and ALB/serum albumin.

Its subcellular location is the secreted. Its function is as follows. Inhibits protease gelatinolytic complex activity against type 1 collagen. This chain is Alpha-2-macroglobulin-like protein 1, found in Mus musculus (Mouse).